Reading from the N-terminus, the 490-residue chain is Serine/threonine-protein kinase BSK6 (490 aa).

The N-myristoyl glycine moiety is linked to residue Gly2. Ser25 bears the Phosphoserine mark. The 255-residue stretch at 56–310 (DNIVSEHGEK…KSLVTSLVTL (255 aa)) folds into the Protein kinase domain. Residues 62–70 (HGEKAPNVV) and Lys84 contribute to the ATP site. Asp178 acts as the Proton acceptor in catalysis. Residue Ser373 is modified to Phosphoserine.

This sequence belongs to the protein kinase superfamily. Ser/Thr protein kinase family. As to quaternary structure, interacts with BRI1, ASK7/BIN2, ASK9/BIL2, BSK1, BSK5, BSK8 and BSK11. Post-translationally, phosphorylated by BRI1, ASK7/BIN2 and ASK9/BIL2.

The protein resides in the cell membrane. The enzyme catalyses L-seryl-[protein] + ATP = O-phospho-L-seryl-[protein] + ADP + H(+). The catalysed reaction is L-threonyl-[protein] + ATP = O-phospho-L-threonyl-[protein] + ADP + H(+). Probable serine/threonine kinase that acts as a positive regulator of brassinosteroid (BR) signaling downstream of the receptor kinase BRI1. Functions redundantly with BSK3, BSK4, BSK7 and BSK8. This Arabidopsis thaliana (Mouse-ear cress) protein is Serine/threonine-protein kinase BSK6.